Here is a 358-residue protein sequence, read N- to C-terminus: Membrane-bound lytic murein transglycosylase C (358 aa).

The signal sequence occupies residues 1 to 16 (MKKILALLVIAPLLVS). Cys-17 carries N-palmitoyl cysteine lipidation. Cys-17 carries S-diacylglycerol cysteine lipidation.

The protein belongs to the transglycosylase Slt family.

It localises to the cell outer membrane. The enzyme catalyses Exolytic cleavage of the (1-&gt;4)-beta-glycosidic linkage between N-acetylmuramic acid (MurNAc) and N-acetylglucosamine (GlcNAc) residues in peptidoglycan, from either the reducing or the non-reducing ends of the peptidoglycan chains, with concomitant formation of a 1,6-anhydrobond in the MurNAc residue.. Murein-degrading enzyme. May play a role in recycling of muropeptides during cell elongation and/or cell division. The polypeptide is Membrane-bound lytic murein transglycosylase C (Yersinia enterocolitica serotype O:8 / biotype 1B (strain NCTC 13174 / 8081)).